Here is a 265-residue protein sequence, read N- to C-terminus: Transcriptional repressor DcmR (265 aa).

Residues 17–36 (LDIKQAASLLNVSEASLRRW) constitute a DNA-binding region (H-T-H motif).

As to quaternary structure, monomer.

Its function is as follows. Transcriptional repressor of the dcmA gene and of its own gene. The protein is Transcriptional repressor DcmR (dcmR) of Methylorubrum extorquens (strain DSM 6343 / CIP 106787 / DM4) (Methylobacterium extorquens).